We begin with the raw amino-acid sequence, 3092 residues long: Probable polyketide synthase 45 (3092 aa).

The region spanning 10–430 is the Ketosynthase family 3 (KS3) domain; it reads DNDVAIIGIG…GSNVCLILTE (421 aa). Residues Cys-170, His-315, and His-353 each act as for beta-ketoacyl synthase activity in the active site. Residues 640–673 form an acyl/malonyl transferase region; that stretch reads GILASISIGHSLGEVSSAVCSGMIDLETGCFIIY. The active-site For acyl/malonyl transferase activity is Ser-650. Residues 967-1087 form an N-terminal hotdog fold region; that stretch reads INQLGNRNER…GKFSITKHND (121 aa). The region spanning 967-1254 is the PKS/mFAS DH domain; the sequence is INQLGNRNER…YTQLTPYKNQ (288 aa). Catalysis depends on His-999, which acts as the Proton acceptor; for dehydratase activity. A C-terminal hotdog fold region spans residues 1103-1254; it reads NFVTIQKKEL…YTQLTPYKNQ (152 aa). The Proton donor; for dehydratase activity role is filled by Asp-1165. One can recognise a Carrier domain in the interval 2566 to 2644; sequence SDDLSIREEI…QLIQSVTDAM (79 aa). Ser-2604 is subject to O-(pantetheine 4'-phosphoryl)serine. Residues 2705–2725 form a helical membrane-spanning segment; that stretch reads NTVFLTGSSGFIGIYILFYLI.

Requires pantetheine 4'-phosphate as cofactor.

It is found in the membrane. Its function is as follows. Probable polyketide synthase. This Dictyostelium discoideum (Social amoeba) protein is Probable polyketide synthase 45 (pks45).